Here is a 600-residue protein sequence, read N- to C-terminus: Integrator complex subunit 11 (600 aa).

6 residues coordinate Zn(2+): His-68, His-70, Asp-72, His-73, His-157, and Asp-178. An HXHXDH motif motif is present at residues 68–73; the sequence is HFHLDH. The active site involves Glu-203. Lys-381 is covalently cross-linked (Glycyl lysine isopeptide (Lys-Gly) (interchain with G-Cter in SUMO)). A Zn(2+)-binding site is contributed by His-414. Residues Lys-462 and Lys-475 each participate in a glycyl lysine isopeptide (Lys-Gly) (interchain with G-Cter in SUMO) cross-link. A Nuclear localization signal motif is present at residues 469 to 479; sequence LLPEAKKPRLL.

Belongs to the metallo-beta-lactamase superfamily. RNA-metabolizing metallo-beta-lactamase-like family. INTS11 subfamily. As to quaternary structure, component of the Integrator complex, composed of core subunits INTS1, INTS2, INTS3, INTS4, INTS5, INTS6, INTS7, INTS8, INTS9/RC74, INTS10, INTS11/CPSF3L, INTS12, INTS13, INTS14 and INTS15. The core complex associates with protein phosphatase 2A subunits PPP2CA and PPP2R1A, to form the Integrator-PP2A (INTAC) complex. INTS11 is part of the RNA endonuclease subcomplex, composed of INTS4, INTS9, INTS11 and inositol hexakisphosphate (InsP6). Interacts with WDR73; interaction is required for the assembly of the RNA endonuclease subcomplex in the cytoplasm. Interacts with BRAT1; interaction is required for the assembly of the RNA endonuclease subcomplex and inhibits the endonuclease activity of INTS11 before formation of mature integrator complex. It depends on Zn(2+) as a cofactor. In terms of processing, sumoylated; sumoylation regulates its subcellular location and is required for integrator complex integrity.

It localises to the nucleus. It is found in the cytoplasm. Its activity is regulated as follows. The RNA endonuclease activity is inhibited by BRAT1 that forms hyrogen bond and hydrophobic interactions with the active site. RNA endonuclease component of the integrator complex, a multiprotein complex that terminates RNA polymerase II (Pol II) transcription in the promoter-proximal region of genes. The integrator complex provides a quality checkpoint during transcription elongation by driving premature transcription termination of transcripts that are unfavorably configured for transcriptional elongation: the complex terminates transcription by (1) catalyzing dephosphorylation of the C-terminal domain (CTD) of Pol II subunit POLR2A/RPB1 and SUPT5H/SPT5, (2) degrading the exiting nascent RNA transcript via endonuclease activity and (3) promoting the release of Pol II from bound DNA. The integrator complex is also involved in terminating the synthesis of non-coding Pol II transcripts, such as enhancer RNAs (eRNAs), small nuclear RNAs (snRNAs), telomerase RNAs and long non-coding RNAs (lncRNAs). Within the integrator complex, INTS11 constitutes the RNA endonuclease subunit that degrades exiting nascent RNA transcripts. Mediates recruitment of cytoplasmic dynein to the nuclear envelope, probably as component of the integrator complex. This chain is Integrator complex subunit 11 (INTS11), found in Pongo abelii (Sumatran orangutan).